We begin with the raw amino-acid sequence, 589 residues long: MAPESKNAGVSVVVNLDSDSDSDNDDGVGGRGAFRSMASLMDKHQVPSTTADATVAPRENLECRSFWKAGENFVIPTGVTNPAAPAIAELIDNAVDEIQNGATFVKIDKINIVKDNSPALVFQDDGGGMDPDGLRKCMSLGYSSKKSNTTIGQYGNGFKTSTMRLGADDIVFTRSTRGGKSTQSVGLLSYTFLRKTGQDDVVVPMIDIDTSKERPQPIIYGSAEDWAASLEIILKWSPFSTEGELWQQLEDIGTHGTKVIIYNLWLNDEGIYELSFHDDNEDIRLRDESVHDSKRVHHNLLELRSHISYHLRYSLRAYASMLYLKRFNNFKIILRGIPVEQFNIADELRLPETIKYNPHTTKEKAPTEIKVGFIKEAPKLAVCGFNVYHKNRLIRPFWKVTMGGERRGSGVVGVLEANFIEPAHDKQDFERSSLFQRLEARLKKIVSNYWNTHCHVFGYCTYGMPADKSKRIAIPDQPPTVNTFNPLPLPSDEIRVSQGGPIIREISLSNATSSRIAAVDTENNLVGKSAHEISEENIQLFMRCEEYVKKETELEQTVSNLAKELEETKSKCARLALLVDAKRREMQQV.

Positions 1–33 (MAPESKNAGVSVVVNLDSDSDSDNDDGVGGRGA) are disordered. The stretch at 542–589 (MRCEEYVKKETELEQTVSNLAKELEETKSKCARLALLVDAKRREMQQV) forms a coiled coil.

The protein belongs to the MORC ATPase protein family. In terms of assembly, homodimer and heterodimer. Component of an RNA-directed DNA methylation (RdDM) complex. Requires Mg(2+) as cofactor. It depends on Mn(2+) as a cofactor.

It is found in the nucleus. Functionally, exhibits ATPase activity. Binds DNA/RNA in a non-specific manner and exhibits endonuclease activity. Probably involved in DNA repair. Involved in RNA-directed DNA methylation (RdDM) as a component of the RdDM machinery and required for gene silencing. May also be involved in the regulation of chromatin architecture to maintain gene silencing. In Arabidopsis thaliana (Mouse-ear cress), this protein is Protein MICRORCHIDIA 3.